The following is an 87-amino-acid chain: Large ribosomal subunit protein bL27 (87 aa).

Residues 1–21 are disordered; the sequence is MAHKKGQGSTQNNRDSAGRRL.

Belongs to the bacterial ribosomal protein bL27 family.

In Nautilia profundicola (strain ATCC BAA-1463 / DSM 18972 / AmH), this protein is Large ribosomal subunit protein bL27.